We begin with the raw amino-acid sequence, 95 residues long: Large ribosomal subunit protein uL23 (95 aa).

It belongs to the universal ribosomal protein uL23 family. As to quaternary structure, part of the 50S ribosomal subunit. Contacts protein L29.

Binds to 23S rRNA. One of the proteins that surrounds the polypeptide exit tunnel on the outside of the ribosome. In Methanopyrus kandleri (strain AV19 / DSM 6324 / JCM 9639 / NBRC 100938), this protein is Large ribosomal subunit protein uL23.